A 215-amino-acid chain; its full sequence is Nitrate/nitrite response regulator protein NarP (215 aa).

The region spanning 8–124 (QVMIVDDHPL…VLLEAIRAGA (117 aa)) is the Response regulatory domain. At aspartate 59 the chain carries 4-aspartylphosphate. The HTH luxR-type domain maps to 147 to 212 (EEDPFSVLTE…AATILFLQQR (66 aa)). The H-T-H motif DNA-binding region spans 171 to 190 (NKQIASVLNISEQTVKVHIR).

Its function is as follows. This protein activates the expression of the nitrate reductase (narGHJI) and formate dehydrogenase-N (fdnGHI) operons and represses the transcription of the fumarate reductase (frdABCD) operon in response to a nitrate/nitrite induction signal transmitted by either the NarX or NarQ proteins. This is Nitrate/nitrite response regulator protein NarP (narP) from Escherichia coli (strain K12).